Here is a 310-residue protein sequence, read N- to C-terminus: Aspartate carbamoyltransferase catalytic subunit (310 aa).

Residues Arg-58 and Thr-59 each contribute to the carbamoyl phosphate site. Lys-86 contacts L-aspartate. Carbamoyl phosphate-binding residues include Arg-108, His-137, and Gln-140. Residues Arg-170 and Arg-225 each coordinate L-aspartate. Positions 264 and 265 each coordinate carbamoyl phosphate.

Belongs to the aspartate/ornithine carbamoyltransferase superfamily. ATCase family. Heterododecamer (2C3:3R2) of six catalytic PyrB chains organized as two trimers (C3), and six regulatory PyrI chains organized as three dimers (R2).

The catalysed reaction is carbamoyl phosphate + L-aspartate = N-carbamoyl-L-aspartate + phosphate + H(+). It functions in the pathway pyrimidine metabolism; UMP biosynthesis via de novo pathway; (S)-dihydroorotate from bicarbonate: step 2/3. Catalyzes the condensation of carbamoyl phosphate and aspartate to form carbamoyl aspartate and inorganic phosphate, the committed step in the de novo pyrimidine nucleotide biosynthesis pathway. This Coxiella burnetii (strain CbuK_Q154) (Coxiella burnetii (strain Q154)) protein is Aspartate carbamoyltransferase catalytic subunit.